The primary structure comprises 558 residues: TNF receptor-associated factor 5 (558 aa).

The RING-type zinc finger occupies 45–85 (CAFCHSVLHNPHQTGCGHRFCQQCIRSLRELNSVPICPVDK). TRAF-type zinc fingers lie at residues 127–181 (DHLQ…TNLQ) and 182–239 (DHEE…GNLL). Positions 252–302 (LVLEKNYQLEQRISDLYQSLEQKESKIQQLAETVKKFEKELKQFTQMFGRN) form a coiled coil. Lys318 participates in a covalent cross-link: Glycyl lysine isopeptide (Lys-Gly) (interchain with G-Cter in ubiquitin). The stretch at 340-400 (LDLRSLVDAV…EERFKQLEGA (61 aa)) forms a coiled coil. Residues 345-558 (LVDAVDSVKQ…AVDLTDLEDL (214 aa)) are interaction with EIF2AK2/PKR. One can recognise an MATH domain in the interval 403–550 (SGKLIWKVTD…DDTLFLKVAV (148 aa)).

The protein belongs to the TNF receptor-associated factor family. A subfamily. Homotrimer. Heterotrimer with TRAF3. Associates with TNFRSF5/CD40 through interaction with TRAF3. Associates with LTBR/TNFRSF3, TNFRSF4, TNFRSF8/CD30, TNFRSF11A/RANK, TNFRSF13B/TACI, TNFRSF14, TNFRSF17, TNFRSF19/TROY, RIPK2, MAP3K14, MAP3K5, and TRAF and TNF receptor associated protein TDP2. Interacts (via C-terminus) with EIF2AK2/PKR (via the kinase catalytic domain). In terms of processing, ubiquitinated at Lys-318 by the SCF(FBXL2) complex, leading to its degradation by the proteasome.

The protein localises to the cytoplasm. The protein resides in the cytosol. Functionally, adapter protein and signal transducer that links members of the tumor necrosis factor receptor family to different signaling pathways by association with the receptor cytoplasmic domain and kinases. Mediates activation of NF-kappa-B and probably JNK. Seems to be involved in apoptosis. Plays a role in mediating activation of NF-kappa-B by EIF2AK2/PKR. In Mus musculus (Mouse), this protein is TNF receptor-associated factor 5 (Traf5).